The following is a 392-amino-acid chain: Type III polyketide synthase B (392 aa).

Position 57–64 (57–64 (KLTRLCKT)) interacts with CoA. Cysteine 166 (nucleophile) is an active-site residue. 218 to 219 (GD) contacts substrate. CoA-binding positions include leucine 269, 309–312 (GGPA), and alanine 312.

The protein belongs to the thiolase-like superfamily. Chalcone/stilbene synthases family. As to quaternary structure, homodimer. Interacts with 4CLL1/ACOS5 and TKPR1. In terms of tissue distribution, expressed in flowers and flower buds (at protein level). Mostly confined to anther tapetal cells.

Its subcellular location is the endoplasmic reticulum. It participates in secondary metabolite biosynthesis; flavonoid biosynthesis. Its function is as follows. Plant type III polyketide synthases (PKSs) that catalyzes the condensation of malonyl-CoA units with various CoA ester starter molecules to generate a diverse array of natural products including long-chain alkyl alpha-pyrones. Accepts up to C(20) chain-length fatty acyl CoAs as starter substrates, and carries out sequential condensations with malonyl-CoA to produce triketide and tetraketide alpha-pyrones, potential sporopollenin precursors. Favorite substrates for are midchain- and v-hydroxylated fatty acyl-CoAs (e.g. 12-hydroxyoctadecanoyl-CoA and 16-hydroxyhexadecanoyl-CoA). Required for pollen development and sporopollenin biosynthesis, the major constituent of exine in the outer pollen wall. In vitro, can use 4-coumaroyl-coenzyme A as substrate to produce bis-noryangonin and fatty acyl-coenzyme A as substrate to produce medium-chain alkyl pyrones. May play a role in both the synthesis of pollen fatty acids and phenolics found in exine. The protein is Type III polyketide synthase B of Arabidopsis thaliana (Mouse-ear cress).